Reading from the N-terminus, the 540-residue chain is Cytochrome P450 27C1 (540 aa).

Cys486 serves as a coordination point for heme.

It belongs to the cytochrome P450 family. Heme serves as cofactor. Following L-thyroxine, expressed in the retinal pigment epithelium (at protein level).

The protein resides in the membrane. It carries out the reaction all-trans-retinol + 2 reduced [adrenodoxin] + O2 + 2 H(+) = all-trans-3,4-didehydroretinol + 2 oxidized [adrenodoxin] + 2 H2O. In terms of biological role, efficiently catalyzes the conversion of all-trans retinol (also called vitamin A1, the precursor of 11-cis retinal) to 3,4-didehydroretinol (also called vitamin A2, the precursor of 11-cis 3,4-didehydroretinal). Also acts on all-trans retinal and all-trans retinoic acid. The replacement of 11-cis retinal chromophore in photopigments with 11-cis 3,4-didehydroretinal enhances sensitivity to long-wavelength light. This may improve vision in fresh water which is often turbid. In Danio rerio (Zebrafish), this protein is Cytochrome P450 27C1 (cyp27c1).